The chain runs to 298 residues: Phosphatidylserine decarboxylase proenzyme (298 aa).

Catalysis depends on charge relay system; for autoendoproteolytic cleavage activity residues Asp-113, His-169, and Ser-256. The active-site Schiff-base intermediate with substrate; via pyruvic acid; for decarboxylase activity is Ser-256. At Ser-256 the chain carries Pyruvic acid (Ser); by autocatalysis.

This sequence belongs to the phosphatidylserine decarboxylase family. PSD-B subfamily. Prokaryotic type II sub-subfamily. As to quaternary structure, heterodimer of a large membrane-associated beta subunit and a small pyruvoyl-containing alpha subunit. Pyruvate serves as cofactor. Is synthesized initially as an inactive proenzyme. Formation of the active enzyme involves a self-maturation process in which the active site pyruvoyl group is generated from an internal serine residue via an autocatalytic post-translational modification. Two non-identical subunits are generated from the proenzyme in this reaction, and the pyruvate is formed at the N-terminus of the alpha chain, which is derived from the carboxyl end of the proenzyme. The autoendoproteolytic cleavage occurs by a canonical serine protease mechanism, in which the side chain hydroxyl group of the serine supplies its oxygen atom to form the C-terminus of the beta chain, while the remainder of the serine residue undergoes an oxidative deamination to produce ammonia and the pyruvoyl prosthetic group on the alpha chain. During this reaction, the Ser that is part of the protease active site of the proenzyme becomes the pyruvoyl prosthetic group, which constitutes an essential element of the active site of the mature decarboxylase.

It localises to the cell membrane. It catalyses the reaction a 1,2-diacyl-sn-glycero-3-phospho-L-serine + H(+) = a 1,2-diacyl-sn-glycero-3-phosphoethanolamine + CO2. It participates in phospholipid metabolism; phosphatidylethanolamine biosynthesis; phosphatidylethanolamine from CDP-diacylglycerol: step 2/2. In terms of biological role, catalyzes the formation of phosphatidylethanolamine (PtdEtn) from phosphatidylserine (PtdSer). In Desulfitobacterium hafniense (strain Y51), this protein is Phosphatidylserine decarboxylase proenzyme.